Here is a 787-residue protein sequence, read N- to C-terminus: Integrin beta-3 (787 aa).

The N-terminal stretch at 1–25 (MRTRRPGQLWATLLALGALAGVVVG) is a signal peptide. At 27–717 (SNICTTRGVN…EEPECPKGPD (691 aa)) the chain is on the extracellular side. In terms of domain architecture, PSI spans 29–75 (ICTTRGVNSCQQCLAVSPVCAWCSDESLPQNSPRCNLKKNLLKDKCS). Cystine bridges form between cysteine 30–cysteine 48, cysteine 38–cysteine 460, cysteine 41–cysteine 63, cysteine 51–cysteine 74, cysteine 202–cysteine 209, cysteine 257–cysteine 298, cysteine 399–cysteine 411, cysteine 431–cysteine 458, cysteine 462–cysteine 482, cysteine 473–cysteine 485, cysteine 487–cysteine 496, cysteine 498–cysteine 528, cysteine 511–cysteine 526, cysteine 520–cysteine 531, cysteine 533–cysteine 546, cysteine 548–cysteine 569, cysteine 553–cysteine 567, cysteine 561–cysteine 572, and cysteine 574–cysteine 583. Residues 134 to 376 (DYPVDIYYLM…QLIVDAYGKI (243 aa)) enclose the VWFA domain. Mg(2+)-binding residues include serine 146 and serine 148. Residues serine 148, aspartate 151, aspartate 152, and aspartate 183 each coordinate Ca(2+). The segment at 202-209 (CYTMKSTC) is CX3CL1-binding. The involved in CX3CL1-, NRG1-, FGF1- and IGF1-binding stretch occupies residues 202-209 (CYTMKSTC). The Ca(2+) site is built by asparagine 240, aspartate 242, proline 244, glutamate 245, and aspartate 276. Glutamate 245 lines the Mg(2+) pocket. Residues 292-312 (LPNDGRCHIGPDNHYSASTTM) are CX3CL1-binding. Asparagine 345 and asparagine 396 each carry an N-linked (GlcNAc...) asparagine glycan. 4 consecutive I-EGF domains span residues 462-497 (CQAFAQPLSPRCNNGNGTFECGVCRCDQGWLGSMCE), 498-547 (CSEE…KYCE), 548-584 (CDDFSCVRYKGEMCSGHGQCNCGDCVCDSDWTGYYCN), and 585-624 (CTTRTDTCMSTNGLLCSGRGNCECGSCVCVQPGSYGDTCE). N-linked (GlcNAc...) asparagine glycosylation occurs at asparagine 477. Asparagine 584 is a glycosylation site (N-linked (GlcNAc...) asparagine). Disulfide bonds link cysteine 585/cysteine 608, cysteine 592/cysteine 606, cysteine 600/cysteine 611, cysteine 613/cysteine 623, cysteine 626/cysteine 629, cysteine 633/cysteine 680, cysteine 639/cysteine 660, cysteine 642/cysteine 656, and cysteine 688/cysteine 712. Asparagine 679 carries an N-linked (GlcNAc...) asparagine glycan. The chain crosses the membrane as a helical span at residues 718 to 738 (ILVVLLSVMGAILLIGLATLL). Over 739 to 787 (IWKLLITIHDRKEFAKFEEERARAKWDTANNPLYKEATSTFTNITYRGT) the chain is Cytoplasmic. Threonine 766 bears the Phosphothreonine mark. A Phosphotyrosine modification is found at tyrosine 772. An LIR motif is present at residues 776 to 782 (TSTFTNI). Threonine 778 is modified (phosphothreonine). Tyrosine 784 is modified (phosphotyrosine).

It belongs to the integrin beta chain family. As to quaternary structure, heterodimer of an alpha and a beta subunit. Beta-3 (ITGB3) associates with either alpha-IIB (ITGA2B) or alpha-V (ITGAV). Interacts with FLNB and COMP. Interacts with PDIA6 following platelet stimulation. Interacts with SYK; upon activation by ITGB3 promotes platelet adhesion. Interacts with MYO10. Interacts with DAB2. Interacts with FERMT2. Integrin ITGAV:ITGB3 interacts with FBLN5 (via N-terminus). Interacts with EMP2; regulates the levels of the heterodimer ITGA5:ITGB3 integrin expression on the plasma membrane. ITGAV:ITGB3 interacts with CCN3. ITGAV:ITGB3 and ITGA2B:ITGB3 interact with SELP (via C-type lectin domain); the interaction mediates cell-cell interaction and adhesion. ITGAV:ITGB3 interacts with AGRA2. ITGAV:ITGB3 is found in a ternary complex with CX3CR1 and CX3CL1. ITGAV:ITGB3 is found in a ternary complex with NRG1 and ERBB3. ITGAV:ITGB3 is found in a ternary complex with FGF1 and FGFR1. ITGAV:ITGB3 interacts with FGF2; it is likely that FGF2 can simultaneously bind ITGAV:ITGB3 and FGF receptors. ITGAV:ITGB3 binds to IL1B. ITGAV:ITGB3 is found in a ternary complex with IGF1 and IGF1R. ITGAV:ITGB3 interacts with IGF2. ITGAV:ITGB3 interacts with FBN1. ITGAV:ITGB3 interacts with CD9, CD81 and CD151 (via second extracellular domain). Interacts (via the allosteric site (site 2)) with CXCL12 in a CXCR4-independent manner. Interacts with MXRA8/DICAM; the interaction inhibits ITGAV:ITGB3 heterodimer formation. ITGAV:ITGB3 interacts with PTN. Forms a complex with PTPRZ1 and PTN that stimulates endothelial cell migration through ITGB3 Tyr-772 phosphorylation. ITGAV:ITGB3 interacts with SLC6A4. Interacts with SLC6A4 (via C-terminus); this interaction regulates SLC6A4 trafficking. ITGA2B:ITGB3 interacts with PPIA/CYPA; the interaction is ROS and PPIase activity-dependent and is increased in the presence of thrombin. Interacts with tensin TNS3; TNS3 also interacts with PEAK1, thus acting as an adapter molecule to bridge the association of PEAK1 with ITGB3. Interacts with TM4SF19. In terms of processing, phosphorylated on tyrosine residues in response to thrombin-induced platelet aggregation. Probably involved in outside-in signaling.

It localises to the cell membrane. It is found in the cell projection. The protein resides in the lamellipodium membrane. Its subcellular location is the cell junction. The protein localises to the focal adhesion. It localises to the postsynaptic cell membrane. It is found in the synapse. Integrin alpha-V/beta-3 (ITGAV:ITGB3) is a receptor for cytotactin, fibronectin, laminin, matrix metalloproteinase-2, osteopontin, osteomodulin, prothrombin, thrombospondin, vitronectin and von Willebrand factor. Integrin alpha-IIB/beta-3 (ITGA2B:ITGB3) is a receptor for fibronectin, fibrinogen, plasminogen, prothrombin, thrombospondin and vitronectin. Integrins alpha-IIB/beta-3 and alpha-V/beta-3 recognize the sequence R-G-D in a wide array of ligands. Integrin alpha-IIB/beta-3 recognizes the sequence H-H-L-G-G-G-A-K-Q-A-G-D-V in fibrinogen gamma chain. Following activation integrin alpha-IIB/beta-3 brings about platelet/platelet interaction through binding of soluble fibrinogen. This step leads to rapid platelet aggregation which physically plugs ruptured endothelial surfaces. Fibrinogen binding enhances SELP expression in activated platelets. ITGAV:ITGB3 binds to fractalkine (CX3CL1) and acts as its coreceptor in CX3CR1-dependent fractalkine signaling. ITGAV:ITGB3 binds to NRG1 (via EGF domain) and this binding is essential for NRG1-ERBB signaling. ITGAV:ITGB3 binds to FGF1 and this binding is essential for FGF1 signaling. ITGAV:ITGB3 binds to FGF2 and this binding is essential for FGF2 signaling. ITGAV:ITGB3 binds to IGF1 and this binding is essential for IGF1 signaling. ITGAV:ITGB3 binds to IGF2 and this binding is essential for IGF2 signaling. ITGAV:ITGB3 binds to IL1B and this binding is essential for IL1B signaling. ITGAV:ITGB3 binds to PLA2G2A via a site (site 2) which is distinct from the classical ligand-binding site (site 1) and this induces integrin conformational changes and enhanced ligand binding to site 1. ITGAV:ITGB3 acts as a receptor for fibrillin-1 (FBN1) and mediates R-G-D-dependent cell adhesion to FBN1. In brain, plays a role in synaptic transmission and plasticity. Involved in the regulation of the serotonin neurotransmission, is required to localize to specific compartments within the synapse the serotonin receptor SLC6A4 and for an appropriate reuptake of serotonin. Controls excitatory synaptic strength by regulating GRIA2-containing AMPAR endocytosis, which affects AMPAR abundance and composition. ITGAV:ITGB3 acts as a receptor for CD40LG. ITGAV:ITGB3 acts as a receptor for IBSP and promotes cell adhesion and migration to IBSP. The sequence is that of Integrin beta-3 from Rattus norvegicus (Rat).